A 1576-amino-acid polypeptide reads, in one-letter code: Disco-interacting protein 2 homolog B (1576 aa).

3 positions are modified to phosphoserine: Ser9, Ser50, and Ser53. The 120-residue stretch at 12–131 folds into the DMAP1-binding domain; that stretch reads AVAALPPEVR…PMPTKRRSTF (120 aa). Positions 31–167 are disordered; sequence LSEGDITQKG…AALSAALQQS (137 aa). Residues 52-62 are compositionally biased toward polar residues; the sequence is YSPQTQETDSA. The span at 70–83 shows a compositional bias: low complexity; it reads QTPAPSAAQTSAPS. Thr71 carries the phosphothreonine modification. Over residues 92–104 the composition is skewed to basic and acidic residues; that stretch reads GARDERYRSDIHT. The residue at position 100 (Ser100) is a Phosphoserine. Phosphothreonine is present on Thr140. Phosphoserine occurs at positions 146, 148, and 153. The span at 155–167 shows a compositional bias: low complexity; the sequence is RRQAALSAALQQS. Phosphoserine is present on residues Ser178, Ser193, and Ser203. The segment at 179-201 is disordered; the sequence is IQGSSTSSSASSTLSHGEVKGTS. Residues 182-193 are compositionally biased toward low complexity; it reads SSTSSSASSTLS. A disordered region spans residues 217–246; the sequence is SAPPDVTTTTSSSSSSSSIRPANIDLPPSG. The span at 223 to 234 shows a compositional bias: low complexity; that stretch reads TTTTSSSSSSSS. A Phosphoserine modification is found at Ser259.

The protein belongs to the DIP2 family. As to quaternary structure, interacts with alpha-tubulin. In terms of tissue distribution, moderately expressed in adult brain, placenta, skeletal muscle, heart, kidney, pancreas, lung, spleen and colon. Expression was weaker in adult liver, kidney, spleen, and ovary, and in fetal brain and liver. In the brain, it is expressed in the cerebral cortex; the frontal, parietal, occipital and temporal lobes; the paracentral gyrus; the pons; the corpus callosum and the hippocampus. Highest expression levels in the brain were found in the cerebral cortex and the frontal and parietal lobes.

The protein resides in the cell projection. It localises to the dendrite. It is found in the axon. Its subcellular location is the perikaryon. Functionally, negatively regulates axonal outgrowth and is essential for normal synaptic transmission. Not required for regulation of axon polarity. Promotes acetylation of alpha-tubulin. In Homo sapiens (Human), this protein is Disco-interacting protein 2 homolog B (DIP2B).